Reading from the N-terminus, the 462-residue chain is CUGBP Elav-like family member 3-B (462 aa).

3 consecutive RRM domains span residues 7 to 88 (IKLF…PADS), 95 to 175 (RKLF…FADT), and 377 to 455 (CNIF…LKRP).

The protein belongs to the CELF/BRUNOL family.

It localises to the nucleus. The protein localises to the cytoplasm. Functionally, RNA-binding protein that may be involved in the regulation of pre-mRNA alternative splicing. This chain is CUGBP Elav-like family member 3-B (tnrc4-b), found in Xenopus laevis (African clawed frog).